A 96-amino-acid chain; its full sequence is Glutamyl-tRNA(Gln) amidotransferase subunit C (96 aa).

Belongs to the GatC family. Heterotrimer of A, B and C subunits.

It carries out the reaction L-glutamyl-tRNA(Gln) + L-glutamine + ATP + H2O = L-glutaminyl-tRNA(Gln) + L-glutamate + ADP + phosphate + H(+). The enzyme catalyses L-aspartyl-tRNA(Asn) + L-glutamine + ATP + H2O = L-asparaginyl-tRNA(Asn) + L-glutamate + ADP + phosphate + 2 H(+). In terms of biological role, allows the formation of correctly charged Asn-tRNA(Asn) or Gln-tRNA(Gln) through the transamidation of misacylated Asp-tRNA(Asn) or Glu-tRNA(Gln) in organisms which lack either or both of asparaginyl-tRNA or glutaminyl-tRNA synthetases. The reaction takes place in the presence of glutamine and ATP through an activated phospho-Asp-tRNA(Asn) or phospho-Glu-tRNA(Gln). This Neisseria meningitidis serogroup B (strain ATCC BAA-335 / MC58) protein is Glutamyl-tRNA(Gln) amidotransferase subunit C.